The sequence spans 465 residues: Cysteine--tRNA ligase (465 aa).

Zn(2+) is bound at residue Cys30. A 'HIGH' region motif is present at residues 32–42; the sequence is MTVYDYCHVGH. Residues Cys214, His239, and Glu243 each coordinate Zn(2+). The short motif at 271 to 275 is the 'KMSKS' region element; it reads KMSKS. Lys274 provides a ligand contact to ATP.

It belongs to the class-I aminoacyl-tRNA synthetase family. Monomer. Zn(2+) is required as a cofactor.

It localises to the cytoplasm. The enzyme catalyses tRNA(Cys) + L-cysteine + ATP = L-cysteinyl-tRNA(Cys) + AMP + diphosphate. The sequence is that of Cysteine--tRNA ligase from Ralstonia nicotianae (strain ATCC BAA-1114 / GMI1000) (Ralstonia solanacearum).